Reading from the N-terminus, the 691-residue chain is DNA ligase (691 aa).

NAD(+) is bound by residues 41 to 45 (DAEYD), 90 to 91 (SL), and Glu-130. Lys-132 functions as the N6-AMP-lysine intermediate in the catalytic mechanism. Arg-153, Glu-190, Lys-307, and Lys-331 together coordinate NAD(+). Residues Cys-425, Cys-428, Cys-443, and Cys-449 each contribute to the Zn(2+) site. One can recognise a BRCT domain in the interval 610–691 (APQGVLAGKT…LHQLLEGNTP (82 aa)).

The protein belongs to the NAD-dependent DNA ligase family. LigA subfamily. The cofactor is Mg(2+). Requires Mn(2+) as cofactor.

The catalysed reaction is NAD(+) + (deoxyribonucleotide)n-3'-hydroxyl + 5'-phospho-(deoxyribonucleotide)m = (deoxyribonucleotide)n+m + AMP + beta-nicotinamide D-nucleotide.. Functionally, DNA ligase that catalyzes the formation of phosphodiester linkages between 5'-phosphoryl and 3'-hydroxyl groups in double-stranded DNA using NAD as a coenzyme and as the energy source for the reaction. It is essential for DNA replication and repair of damaged DNA. The protein is DNA ligase of Burkholderia ambifaria (strain MC40-6).